The primary structure comprises 617 residues: Lipoteichoic acid synthase-like YvgJ (617 aa).

Residues 1-10 lie on the Cytoplasmic side of the membrane; sequence MKGTFFHNQR. A helical transmembrane segment spans residues 11–31; sequence FLCFSILFMWIKTYVIYKLGF. The Extracellular segment spans residues 32 to 41; it reads DLQIDTLLEE. Residues 42 to 62 form a helical membrane-spanning segment; that stretch reads LMLLVNPLSFILPLFGIGLFL. At 63-68 the chain is on the cytoplasmic side; it reads KENKQR. A helical transmembrane segment spans residues 69–89; sequence AFLLIANLVLTVILISNTIFY. At 90–115 the chain is on the extracellular side; the sequence is GFYIDFITIPVLFQASNMSDMGSSVK. A helical membrane pass occupies residues 116 to 136; the sequence is ELFHPLFIALFVDLVFLLLFA. Over 137 to 153 the chain is Cytoplasmic; it reads RKTKHPQTKAAPHTIKR. Residues 154–171 traverse the membrane as a helical segment; it reads YYAASCGMLLCTLALAEV. Residues 172-617 lie on the Extracellular side of the membrane; sequence QQPKLLAHSF…LNGDLLRFSE (446 aa). The Mn(2+) site is built by glutamate 251 and threonine 293. Threonine 293 is an active-site residue. Histidine 408 lines the substrate pocket. 2 residues coordinate Mn(2+): aspartate 467 and histidine 468.

Belongs to the LTA synthase family. In terms of processing, proteolytically cleaved.

The protein resides in the cell membrane. It is found in the secreted. The sequence is that of Lipoteichoic acid synthase-like YvgJ (yvgJ) from Bacillus subtilis (strain 168).